The following is a 401-amino-acid chain: Argininosuccinate synthase (401 aa).

ATP is bound at residue 8-16 (AYSGGLDTS). Residue Tyr87 participates in L-citrulline binding. Position 117 (Gly117) interacts with ATP. Positions 119, 123, and 124 each coordinate L-aspartate. Asn123 contacts L-citrulline. The L-citrulline site is built by Arg127, Ser175, Glu259, and Tyr271.

This sequence belongs to the argininosuccinate synthase family. Type 1 subfamily. Homotetramer.

Its subcellular location is the cytoplasm. The enzyme catalyses L-citrulline + L-aspartate + ATP = 2-(N(omega)-L-arginino)succinate + AMP + diphosphate + H(+). It functions in the pathway amino-acid biosynthesis; L-arginine biosynthesis; L-arginine from L-ornithine and carbamoyl phosphate: step 2/3. This chain is Argininosuccinate synthase, found in Pseudarthrobacter chlorophenolicus (strain ATCC 700700 / DSM 12829 / CIP 107037 / JCM 12360 / KCTC 9906 / NCIMB 13794 / A6) (Arthrobacter chlorophenolicus).